The sequence spans 170 residues: Ureidoglycolate lyase (170 aa).

This sequence belongs to the ureidoglycolate lyase family. Homodimer. Requires Ni(2+) as cofactor.

The catalysed reaction is (S)-ureidoglycolate = urea + glyoxylate. Its pathway is nitrogen metabolism; (S)-allantoin degradation. Functionally, catalyzes the catabolism of the allantoin degradation intermediate (S)-ureidoglycolate, generating urea and glyoxylate. Involved in the utilization of allantoin as nitrogen source. This is Ureidoglycolate lyase from Pseudomonas syringae pv. tomato (strain ATCC BAA-871 / DC3000).